Here is a 361-residue protein sequence, read N- to C-terminus: MSTVEDQLSLELETVNKDILLKKALLHYKDAIKSEREGNLGESLNKYRLAHKVHEDVESIYRRLERLQLCKRNEEEEMLNSDASEAMLTVSSVPSPTLTENESVNESVVPNILKLPDEVLLVILENCIRDLHDLRYLSSIALTCKHFAKALRADSLYRSFCYCSCEQKEWQQSIKSIEEELVEKYQQSWKTLFLKKPRSRFDGCYISVCRYFRPGTSDTSWNQPIHLITYYRYLRLYPNSTCIVYQSSNEPNDVVRNFSVQNTSLFSPMSSSPMFSNGNVALTGSWSMTPSGEMLIVYPASQTYTYVQKLQVRGIRLKWISFYSIHNYTSFTNEMPLTHNRDYVFSRVYSYTADSESLKRG.

In terms of domain architecture, F-box spans N105–Y157.

In terms of assembly, interacts with skp1.

The protein localises to the cytoplasm. This chain is F-box protein pof7 (pof7), found in Schizosaccharomyces pombe (strain 972 / ATCC 24843) (Fission yeast).